The chain runs to 91 residues: Acylphosphatase (91 aa).

The Acylphosphatase-like domain maps to 5 to 91; that stretch reads CSKFIVSGHV…EHDYQGFEIL (87 aa). Residues Arg20 and Asn38 contribute to the active site.

It belongs to the acylphosphatase family.

The enzyme catalyses an acyl phosphate + H2O = a carboxylate + phosphate + H(+). The sequence is that of Acylphosphatase (acyP) from Vibrio cholerae serotype O1 (strain ATCC 39315 / El Tor Inaba N16961).